We begin with the raw amino-acid sequence, 1042 residues long: MENAHTKTVEEVLGHFGVNESTGLSLEQVKKLKERWGSNELPAEEGKTLLELVIEQFEDLLVRILLLAACISFVLAWFEEGEETITAFVEPFVILLILVANAIVGVWQERNAENAIEALKEYEPEMGKVYRQDRKSVQRIKAKDIVPGDIVEIAVGDKVPADIRLTSIKSTTLRVDQSILTGESVSVIKHTDPVPDPRAVNQDKKNMLFSGTNIAAGKAMGVVVATGVNTEIGKIRDEMVATEQERTPLQQKLDEFGEQLSKVISLICIAVWIINIGHFNDPVHGGSWIRGAIYYFKIAVALAVAAIPEGLPAVITTCLALGTRRMAKKNAIVRSLPSVETLGCTSVICSDKTGTLTTNQMSVCRMFILDKVDGDTCSLNEFTITGSTYAPIGEVHKDDKPVKCHQYDGLVELATICALCNDSALDYNEAKGVYEKVGEATETALTCLVEKMNVFDTELKGLSKIERANACNSVIKQLMKKEFTLEFSRDRKSMSVYCTPNKPSRTSMSKMFVKGAPEGVIDRCTHIRVGSTKVPMTAGVKQKIMSVIREWGSGSDTLRCLALATHDNPLRREEMHLKDSANFIKYETNLTFVGCVGMLDPPRIEVASSVKLCRQAGIRVIMITGDNKGTAVAICRRIGIFGQEEDVTAKAFTGREFDELNPSAQRDACLNARCFARVEPSHKSKIVEFLQSFDEITAMTGDGVNDAPALKKAEIGIAMGSGTAVAKTASEMVLADDNFSTIVAAVEEGRAIYNNMKQFIRYLISSNVGEVVCIFLTAALGFPEALIPVQLLWVNLVTDGLPATALGFNPPDLDIMNKPPRNPKEPLISGWLFFRYLAIGCYVGAATVGAAAWWFIAADGGPRVSFYQLSHFLQCKEDNPDFEGVDCAIFESPYPMTMALSVLVTIEMCNALNSLSENQSLLRMPPWENIWLVGSICLSMSLHFLILYVEPLPLIFQITPLNVTQWLMVLKISLPVILMDETLKFVARNYLEPGKECVQPAPQSCSLWACTEGVSWPFVLLIVPLVMWVYSTDTNFSDLLWS.

Over 1–48 (MENAHTKTVEEVLGHFGVNESTGLSLEQVKKLKERWGSNELPAEEGKT) the chain is Cytoplasmic. Residue S38 is modified to Phosphoserine. The helical transmembrane segment at 49–69 (LLELVIEQFEDLLVRILLLAA) threads the bilayer. Residues 70–89 (CISFVLAWFEEGEETITAFV) are Lumenal-facing. The helical transmembrane segment at 90-110 (EPFVILLILVANAIVGVWQER) threads the bilayer. Residues 111–253 (NAENAIEALK…QERTPLQQKL (143 aa)) lie on the Cytoplasmic side of the membrane. Residues 254–273 (DEFGEQLSKVISLICIAVWI) form a helical membrane-spanning segment. The Lumenal portion of the chain corresponds to 274–295 (INIGHFNDPVHGGSWIRGAIYY). 3'-nitrotyrosine occurs at positions 294 and 295. Residues 296-313 (FKIAVALAVAAIPEGLPA) traverse the membrane as a helical segment. The Ca(2+) site is built by V304, A305, I307, and E309. Residues 314–756 (VITTCLALGT…EEGRAIYNNM (443 aa)) are Cytoplasmic-facing. D351 (4-aspartylphosphate intermediate) is an active-site residue. Residues D351 and T353 each contribute to the Mg(2+) site. Residue T353 participates in ATP binding. Phosphothreonine is present on T441. Residues E442, R489, and K514 each contribute to the ATP site. Residue S531 is modified to Phosphoserine. R559 serves as a coordination point for ATP. Positions 575 to 594 (MHLKDSANFIKYETNLTFVG) are interaction with HAX1. A Phosphoserine modification is found at S580. Residues T624, G625, and D626 each coordinate ATP. At S663 the chain carries Phosphoserine. Positions 677 and 683 each coordinate ATP. D702 contacts Mg(2+). N705 is a binding site for ATP. The helical transmembrane segment at 757–776 (KQFIRYLISSNVGEVVCIFL) threads the bilayer. N767 and E770 together coordinate Ca(2+). Over 777–786 (TAALGFPEAL) the chain is Lumenal. The chain crosses the membrane as a helical span at residues 787–807 (IPVQLLWVNLVTDGLPATALG). The interaction with PLN stretch occupies residues 787–807 (IPVQLLWVNLVTDGLPATALG). The tract at residues 788-1042 (PVQLLWVNLV…DTNFSDLLWS (255 aa)) is interaction with TMEM64 and PDIA3. N795, T798, and D799 together coordinate Ca(2+). Over 808-827 (FNPPDLDIMNKPPRNPKEPL) the chain is Cytoplasmic. Residues 828 to 850 (ISGWLFFRYLAIGCYVGAATVGA) form a helical membrane-spanning segment. Residues 851–896 (AAWWFIAADGGPRVSFYQLSHFLQCKEDNPDFEGVDCAIFESPYPM) lie on the Lumenal side of the membrane. A disulfide bond links C875 and C887. The chain crosses the membrane as a helical span at residues 897–916 (TMALSVLVTIEMCNALNSLS). Residue E907 coordinates Ca(2+). Residues 917–929 (ENQSLLRMPPWEN) lie on the Cytoplasmic side of the membrane. Residues 930–948 (IWLVGSICLSMSLHFLILY) form a helical membrane-spanning segment. The segment at 931 to 942 (WLVGSICLSMSL) is interaction with PLN. Residues 949-963 (VEPLPLIFQITPLNV) lie on the Lumenal side of the membrane. A helical membrane pass occupies residues 964 to 984 (TQWLMVLKISLPVILMDETLK). At 985 to 1042 (FVARNYLEPGKECVQPAPQSCSLWACTEGVSWPFVLLIVPLVMWVYSTDTNFSDLLWS) the chain is on the cytoplasmic side.

Belongs to the cation transport ATPase (P-type) (TC 3.A.3) family. Type IIA subfamily. In terms of assembly, interacts with sarcolipin (SLN); the interaction inhibits ATP2A2 Ca(2+) affinity. Interacts with phospholamban (PLN); the interaction inhibits ATP2A2 Ca(2+) affinity. Interacts with myoregulin (MRLN). Interacts with ARLN and ERLN; the interactions inhibit ATP2A2 Ca(2+) affinity. Interacts with SRTIT1/DWORF; the interaction results in activation of ATP2A2. Interacts with the monomeric forms of SLN, PLN, ARLN, ERLN and STRI1/DWORF. Interacts with HAX1. Interacts with S100A8 and S100A9. Interacts with SLC35G1 and STIM1. Interacts with TMEM203. Interacts with TMEM64 and PDIA3. Interacts with TMX1. Interacts with TMX2. Interacts with VMP1; VMP1 competes with PLN and SLN to prevent them from forming an inhibitory complex with ATP2A2. Interacts with ULK1. Interacts with TUNAR. Interacts with FLVCR2; this interaction occurs in the absence of heme and promotes ATP2A2 proteasomal degradation; this complex is dissociated upon heme binding. Interacts with FNIP1. Interacts with TRAM2 (via C-terminus). Mg(2+) is required as a cofactor. Nitrated under oxidative stress. Nitration on the two tyrosine residues inhibits catalytic activity. In terms of processing, serotonylated on Gln residues by TGM2 in response to hypoxia, leading to its inactivation. In terms of tissue distribution, isoform 2 is highly expressed in heart and slow twitch skeletal muscle. Isoform 1 is widely expressed.

The protein localises to the endoplasmic reticulum membrane. Its subcellular location is the sarcoplasmic reticulum membrane. The catalysed reaction is Ca(2+)(in) + ATP + H2O = Ca(2+)(out) + ADP + phosphate + H(+). With respect to regulation, has different conformational states with differential Ca2+ affinity. The E1 conformational state (active form) shows high Ca(2+) affinity, while the E2 state exhibits low Ca(2+) affinity. Binding of ATP allosterically increases its affinity for subsequent binding of Ca2+. Reversibly inhibited by phospholamban (PLN) at low calcium concentrations. PLN inhibits ATP2A2 Ca(2+) affinity by disrupting its allosteric activation by ATP. Inhibited by sarcolipin (SLN) and myoregulin (MRLN). The inhibition is blocked by VMP1. Enhanced by STRIT1/DWORF; STRIT1 increases activity by displacing sarcolipin (SLN), phospholamban (PLN) and myoregulin (MRLN). Stabilizes SERCA2 in its E2 state. In terms of biological role, this magnesium-dependent enzyme catalyzes the hydrolysis of ATP coupled with the translocation of calcium from the cytosol to the sarcoplasmic reticulum lumen. Involved in autophagy in response to starvation. Upon interaction with VMP1 and activation, controls ER-isolation membrane contacts for autophagosome formation. Also modulates ER contacts with lipid droplets, mitochondria and endosomes. In coordination with FLVCR2 mediates heme-stimulated switching from mitochondrial ATP synthesis to thermogenesis. Its function is as follows. Involved in the regulation of the contraction/relaxation cycle. Acts as a regulator of TNFSF11-mediated Ca(2+) signaling pathways via its interaction with TMEM64 which is critical for the TNFSF11-induced CREB1 activation and mitochondrial ROS generation necessary for proper osteoclast generation. Association between TMEM64 and SERCA2 in the ER leads to cytosolic Ca(2+) spiking for activation of NFATC1 and production of mitochondrial ROS, thereby triggering Ca(2+) signaling cascades that promote osteoclast differentiation and activation. This is Sarcoplasmic/endoplasmic reticulum calcium ATPase 2 (ATP2A2) from Oryctolagus cuniculus (Rabbit).